A 99-amino-acid chain; its full sequence is Ferredoxin, vegetative (99 aa).

The 2Fe-2S ferredoxin-type domain occupies Tyr4–Pro96. [2Fe-2S] cluster contacts are provided by Cys42, Cys47, Cys50, and Cys80.

Belongs to the 2Fe2S plant-type ferredoxin family. [2Fe-2S] cluster is required as a cofactor.

In terms of biological role, ferredoxins are iron-sulfur proteins that transfer electrons in a wide variety of metabolic reactions. Donates electrons to the nitrogenase 2. The sequence is that of Ferredoxin, vegetative (fdxH2) from Trichormus variabilis (strain ATCC 29413 / PCC 7937) (Anabaena variabilis).